A 251-amino-acid polypeptide reads, in one-letter code: Octanoyltransferase (251 aa).

Positions 49–230 (DEIPDQLLIL…ALDDALAGRL (182 aa)) constitute a BPL/LPL catalytic domain. Substrate-binding positions include 87 to 94 (RGGRITWH), 160 to 162 (AIG), and 173 to 175 (GVA). C191 functions as the Acyl-thioester intermediate in the catalytic mechanism.

Belongs to the LipB family.

It is found in the cytoplasm. It carries out the reaction octanoyl-[ACP] + L-lysyl-[protein] = N(6)-octanoyl-L-lysyl-[protein] + holo-[ACP] + H(+). The protein operates within protein modification; protein lipoylation via endogenous pathway; protein N(6)-(lipoyl)lysine from octanoyl-[acyl-carrier-protein]: step 1/2. In terms of biological role, catalyzes the transfer of endogenously produced octanoic acid from octanoyl-acyl-carrier-protein onto the lipoyl domains of lipoate-dependent enzymes. Lipoyl-ACP can also act as a substrate although octanoyl-ACP is likely to be the physiological substrate. The protein is Octanoyltransferase of Corynebacterium glutamicum (strain R).